A 641-amino-acid chain; its full sequence is Chaperone protein DnaK (641 aa).

Threonine 199 is subject to Phosphothreonine; by autocatalysis. Positions 577–590 (KGDNKDEIETRTQK) are enriched in basic and acidic residues. Residues 577–641 (KGDNKDEIET…EFEEVDDKKK (65 aa)) are disordered. Over residues 617–626 (GAEQASAQQD) the composition is skewed to low complexity. Residues 627-641 (DVVDAEFEEVDDKKK) are compositionally biased toward acidic residues.

This sequence belongs to the heat shock protein 70 family.

Its function is as follows. Acts as a chaperone. The sequence is that of Chaperone protein DnaK from Thioalkalivibrio sulfidiphilus (strain HL-EbGR7).